The chain runs to 353 residues: Photosystem II D2 protein (353 aa).

Threonine 2 is modified (N-acetylthreonine). Threonine 2 carries the phosphothreonine modification. Residues 41-61 traverse the membrane as a helical segment; it reads CAYFALGGWFTGTTFVTSWYT. Residue histidine 118 coordinates chlorophyll a. A helical transmembrane segment spans residues 125 to 141; the sequence is GFMLRQFEIARSVQLRP. Pheophytin a-binding residues include glutamine 130 and asparagine 143. A helical transmembrane segment spans residues 153 to 166; that stretch reads VFVSVFLIYPLGQS. Histidine 198 serves as a coordination point for chlorophyll a. A helical transmembrane segment spans residues 208–228; sequence AALLCAIHGATVENTLFEDGD. Positions 215 and 262 each coordinate a plastoquinone. A Fe cation-binding site is contributed by histidine 215. Histidine 269 provides a ligand contact to Fe cation. Residues 279-295 traverse the membrane as a helical segment; that stretch reads GLWMSALGVVGLALNLR.

This sequence belongs to the reaction center PufL/M/PsbA/D family. In terms of assembly, PSII is composed of 1 copy each of membrane proteins PsbA, PsbB, PsbC, PsbD, PsbE, PsbF, PsbH, PsbI, PsbJ, PsbK, PsbL, PsbM, PsbT, PsbX, PsbY, PsbZ, Psb30/Ycf12, at least 3 peripheral proteins of the oxygen-evolving complex and a large number of cofactors. It forms dimeric complexes. The D1/D2 heterodimer binds P680, chlorophylls that are the primary electron donor of PSII, and subsequent electron acceptors. It shares a non-heme iron and each subunit binds pheophytin, quinone, additional chlorophylls, carotenoids and lipids. There is also a Cl(-1) ion associated with D1 and D2, which is required for oxygen evolution. The PSII complex binds additional chlorophylls, carotenoids and specific lipids. serves as cofactor.

It localises to the plastid. It is found in the chloroplast thylakoid membrane. The enzyme catalyses 2 a plastoquinone + 4 hnu + 2 H2O = 2 a plastoquinol + O2. Its function is as follows. Photosystem II (PSII) is a light-driven water:plastoquinone oxidoreductase that uses light energy to abstract electrons from H(2)O, generating O(2) and a proton gradient subsequently used for ATP formation. It consists of a core antenna complex that captures photons, and an electron transfer chain that converts photonic excitation into a charge separation. The D1/D2 (PsbA/PsbD) reaction center heterodimer binds P680, the primary electron donor of PSII as well as several subsequent electron acceptors. D2 is needed for assembly of a stable PSII complex. The chain is Photosystem II D2 protein from Oenothera argillicola (Appalachian evening primrose).